Reading from the N-terminus, the 308-residue chain is Pseudouridine-5'-phosphate glycosidase (308 aa).

Catalysis depends on Glu29, which acts as the Proton donor. The substrate site is built by Lys90 and Val110. Residue Asp142 participates in Mn(2+) binding. 144-146 (SSD) lines the substrate pocket. The active-site Nucleophile is Lys163.

The protein belongs to the pseudouridine-5'-phosphate glycosidase family. Homotrimer. It depends on Mn(2+) as a cofactor.

The enzyme catalyses D-ribose 5-phosphate + uracil = psi-UMP + H2O. Its function is as follows. Catalyzes the reversible cleavage of pseudouridine 5'-phosphate (PsiMP) to ribose 5-phosphate and uracil. Functions biologically in the cleavage direction, as part of a pseudouridine degradation pathway. The polypeptide is Pseudouridine-5'-phosphate glycosidase (Serratia proteamaculans (strain 568)).